The primary structure comprises 676 residues: Phosphatidylinositol-3,5-bisphosphate 3-phosphatase MTMR6 (676 aa).

The Myotubularin phosphatase domain occupies 125 to 501; sequence GWRRLDWNSE…ARFTVWTAMY (377 aa). Residues Asn249, Asn274, and Ile275 each contribute to the a 1,2-diacyl-sn-glycero-3-phospho-(1D-myo-inositol-3,5-bisphosphate) site. A 1,2-diacyl-sn-glycero-3-phospho-(1D-myo-inositol-3-phosphate) is bound by residues Asn249, Asn274, and Ile275. Substrate is bound by residues 249–252, 274–275, and 335–341; these read NKVQ, NI, and CSDGWDR. Catalysis depends on Cys335, which acts as the Phosphocysteine intermediate. A 1,2-diacyl-sn-glycero-3-phospho-(1D-myo-inositol-3,5-bisphosphate)-binding residues include Ser336, Asp337, Gly338, Trp339, Asp340, Arg341, Lys377, and Arg381. Residues Ser336, Asp337, Gly338, Trp339, Asp340, and Arg341 each coordinate a 1,2-diacyl-sn-glycero-3-phospho-(1D-myo-inositol-3-phosphate). Arg381 is an a 1,2-diacyl-sn-glycero-3-phospho-(1D-myo-inositol-3-phosphate) binding site. Arg381 lines the substrate pocket. An FYVE-type zinc finger spans residues 618–675; that stretch reads KWQPLRGADRCSNPACRGEFSSTIERRIHCHLCGMIFCRRCLKVSADERERVCDKCKT.

Belongs to the protein-tyrosine phosphatase family. Non-receptor class myotubularin subfamily. Heterodimer with mtm-9. Expressed in intestinal cells. Expressed in head neurons, pre-anal ganglion, hypodermal cells, anal depressor muscle and non-neuronal cells in the tail.

Its subcellular location is the cytoplasm. The protein localises to the membrane. It localises to the apical cell membrane. It catalyses the reaction a 1,2-diacyl-sn-glycero-3-phospho-(1D-myo-inositol-3,5-bisphosphate) + H2O = a 1,2-diacyl-sn-glycero-3-phospho-(1D-myo-inositol-5-phosphate) + phosphate. The enzyme catalyses a 1,2-diacyl-sn-glycero-3-phospho-(1D-myo-inositol-3-phosphate) + H2O = a 1,2-diacyl-sn-glycero-3-phospho-(1D-myo-inositol) + phosphate. It carries out the reaction 1,2-dioctanoyl-sn-glycero-3-phospho-(1D-myo-inositol-3,5-bisphosphate) + H2O = 1,2-dioctanoyl-sn-glycero-3-phospho-(1D-myo-inositol-5-phosphate) + phosphate. The catalysed reaction is 1,2-dioctanoyl-sn-glycero-3-phospho-(1-D-myo-inositol-3-phosphate) + H2O = 1,2-dioctanoyl-sn-glycero-3-phospho-(1D-myo-inositol) + phosphate. Functionally, probable lipid phosphatase that specifically dephosphorylates the D-3 position of phosphatidylinositol 3-phosphate and phosphatidylinositol 3,5-bisphosphate, generating phosphatidylinositol and phosphatidylinositol 5-phosphate. In association with mtm-9, plays a role in endosome trafficking probably by regulating phosphatidylinositol-3-phosphate levels. Regulates fluid phase endocytosis in coelomocytes. Controls the endosomal localization of sorting nexin snx-3 and the levels of sorting receptor mig-14. By regulating the retrograde transport of mig-14, may be involved in the secretion of Wnt ligands such as egl-20. Regulates posterior migration of QL neuroblast descendants and the anterior migration of QR neuroblast descendants and HSN neurons during larval development. Involved in the formation of correct synapse number in DA9 motor neurons probably in part by regulating the secretion of Wnt ligand egl-20. This is Phosphatidylinositol-3,5-bisphosphate 3-phosphatase MTMR6 from Caenorhabditis elegans.